The following is a 277-amino-acid chain: Ras suppressor protein 1 (277 aa).

Positions methionine 1–serine 23 are disordered. Position 2 is an N-acetylserine (serine 2). Residues lysine 7–serine 23 show a composition bias toward basic and acidic residues. LRR repeat units follow at residues histidine 41 to lysine 63, asparagine 64 to leucine 85, lysine 87 to proline 109, alanine 110 to leucine 133, threonine 135 to leucine 156, lysine 158 to leucine 179, and glutamine 181 to leucine 202. Residues methionine 250–lysine 277 form a disordered region. A compositionally biased stretch (basic and acidic residues) spans proline 256–lysine 265.

In terms of biological role, potentially plays a role in the Ras signal transduction pathway. Capable of suppressing v-Ras transformation in vitro. The chain is Ras suppressor protein 1 (RSU1) from Bos taurus (Bovine).